A 304-amino-acid polypeptide reads, in one-letter code: Putative HTH-type transcriptional regulatory protein Memar_2347 (304 aa).

An HTH cro/C1-type domain is found at 132–189; the sequence is LREVRERFRMSLGDLASHLGVSRRTISKYESGMGTTLDVAIKLEEIFNAPLVETIELL. The H-T-H motif DNA-binding region spans 143–162; it reads LGDLASHLGVSRRTISKYES.

This is Putative HTH-type transcriptional regulatory protein Memar_2347 from Methanoculleus marisnigri (strain ATCC 35101 / DSM 1498 / JR1).